The following is a 464-amino-acid chain: MNKTIRTRYAPSPTGYLHIGGARTALFCYLFAKHSNGDFIFRLEDTDVERNVEGGEASQLNNLAWLGIVPDESPLKPNPKYGKYRQSEKLAIYQAYIDELIKQGLAYKAYDSSEELAKQHEEQEKAGVASFRYDPTWLKLSESEIKRRDEAKEYSIRLKLPKNKNYSWDDLVRGPISVNSDDIGDFVIMKSDGYPTYNFAVVVDDHQMDITHVLRGEEHITNTPKQLAIYEAFGWDNPVFGHLTIITNMEGKKLSKRDKSLKQFIEDYKNEGYCPEAIFNFLALLGWTSGDKTEIMSHDELIKKFDYNRLSKSPSKFDIVKMEWFSKQYMKKLPNEVIIEKINSPKDAQWNNLFVETYKQQAATISEIKENLKIYLFPKEKLELQIDNDLVVKTFFAHLKAKDFTIENIQAAIDETKNALNVKGKDLFMPIRITATYEEHGPELAKAIYLFGKDLVYKRLTKWS.

The short motif at 11 to 21 is the 'HIGH' region element; that stretch reads PSPTGYLHIGG. Residues 253-257 carry the 'KMSKS' region motif; sequence KLSKR. Position 256 (lysine 256) interacts with ATP.

It belongs to the class-I aminoacyl-tRNA synthetase family. Glutamate--tRNA ligase type 1 subfamily. As to quaternary structure, monomer.

The protein resides in the cytoplasm. It catalyses the reaction tRNA(Glu) + L-glutamate + ATP = L-glutamyl-tRNA(Glu) + AMP + diphosphate. Its function is as follows. Catalyzes the attachment of glutamate to tRNA(Glu) in a two-step reaction: glutamate is first activated by ATP to form Glu-AMP and then transferred to the acceptor end of tRNA(Glu). The protein is Glutamate--tRNA ligase of Metamycoplasma arthritidis (strain 158L3-1) (Mycoplasma arthritidis).